We begin with the raw amino-acid sequence, 257 residues long: Phycoerythrobilin:ferredoxin oxidoreductase (257 aa).

Belongs to the HY2 family.

The catalysed reaction is (3Z)-phycoerythrobilin + oxidized 2[4Fe-4S]-[ferredoxin] = 15,16-dihydrobiliverdin + reduced 2[4Fe-4S]-[ferredoxin] + 2 H(+). Catalyzes the two-electron reduction of the C2 and C3(1) diene system of 15,16-dihydrobiliverdin. This is Phycoerythrobilin:ferredoxin oxidoreductase (pebB) from Synechococcus sp. (strain WH8020).